Reading from the N-terminus, the 506-residue chain is Aminoaldehyde dehydrogenase 2 (506 aa).

Residue Asp101 coordinates Na(+). NAD(+) is bound by residues 161–163 and 187–190; these read TPW and KPSE. Leu191 provides a ligand contact to Na(+). Residues 241–244 and Glu262 contribute to the NAD(+) site; that span reads STET. Residue Glu262 is the Proton acceptor of the active site. Cys297 acts as the Nucleophile in catalysis. NAD(+) is bound by residues Glu396 and Trp462.

This sequence belongs to the aldehyde dehydrogenase family.

It carries out the reaction 4-aminobutanal + NAD(+) + H2O = 4-aminobutanoate + NADH + 2 H(+). The catalysed reaction is 3-aminopropanal + NAD(+) + H2O = beta-alanine + NADH + 2 H(+). It catalyses the reaction 4-(trimethylamino)butanal + NAD(+) + H2O = 4-(trimethylamino)butanoate + NADH + 2 H(+). The enzyme catalyses 4-guanidinobutanal + NAD(+) + H2O = 4-guanidinobutanoate + NADH + 2 H(+). It functions in the pathway amine and polyamine biosynthesis; betaine biosynthesis via choline pathway; betaine from betaine aldehyde: step 1/1. In terms of biological role, dehydrogenase that catalyzes the oxidation of several aminoaldehydes. Metabolizes and detoxifies aldehyde products of polyamine degradation to non-toxic amino acids. Catalyzes the oxidation of 4-aminobutanal and 3-aminopropanal to 4-aminobutanoate and beta-alanine, respectively. Catalyzes the oxidation of 4-(trimethylamino)butanal and 4-guanidinobutanal to 4-trimethylammoniobutanoate and 4-guanidinobutanoate, respectively. This chain is Aminoaldehyde dehydrogenase 2, found in Zea mays (Maize).